The chain runs to 214 residues: ATP phosphoribosyltransferase (214 aa).

The protein belongs to the ATP phosphoribosyltransferase family. Short subfamily. Heteromultimer composed of HisG and HisZ subunits.

The protein resides in the cytoplasm. It catalyses the reaction 1-(5-phospho-beta-D-ribosyl)-ATP + diphosphate = 5-phospho-alpha-D-ribose 1-diphosphate + ATP. Its pathway is amino-acid biosynthesis; L-histidine biosynthesis; L-histidine from 5-phospho-alpha-D-ribose 1-diphosphate: step 1/9. Its function is as follows. Catalyzes the condensation of ATP and 5-phosphoribose 1-diphosphate to form N'-(5'-phosphoribosyl)-ATP (PR-ATP). Has a crucial role in the pathway because the rate of histidine biosynthesis seems to be controlled primarily by regulation of HisG enzymatic activity. This Lysinibacillus sphaericus (strain C3-41) protein is ATP phosphoribosyltransferase.